The following is a 22-amino-acid chain: thr operon leader peptide (22 aa).

This sequence belongs to the thr operon leader peptide family.

This protein is involved in control of the biosynthesis of threonine. The chain is thr operon leader peptide from Yersinia pestis bv. Antiqua (strain Antiqua).